Here is a 101-residue protein sequence, read N- to C-terminus: ATP-dependent Clp protease adapter protein ClpS (101 aa).

It belongs to the ClpS family. Binds to the N-terminal domain of the chaperone ClpA.

Involved in the modulation of the specificity of the ClpAP-mediated ATP-dependent protein degradation. The polypeptide is ATP-dependent Clp protease adapter protein ClpS (Corynebacterium jeikeium (strain K411)).